A 195-amino-acid polypeptide reads, in one-letter code: Large ribosomal subunit protein bL17 (195 aa).

A disordered region spans residues 125-195; sequence ANRARRVGAS…PTQDSDADKS (71 aa). The span at 136–152 shows a compositional bias: low complexity; the sequence is QTAPVAAAAAPQAAVEP. Acidic residues-rich tracts occupy residues 153 to 173 and 183 to 195; these read EATE…EDTT and TDDP…ADKS.

This sequence belongs to the bacterial ribosomal protein bL17 family. As to quaternary structure, part of the 50S ribosomal subunit. Contacts protein L32.

The sequence is that of Large ribosomal subunit protein bL17 from Mycobacterium sp. (strain JLS).